We begin with the raw amino-acid sequence, 499 residues long: Glycerol kinase (499 aa).

Thr13 contributes to the ADP binding site. Thr13, Thr14, and Ser15 together coordinate ATP. Thr13 is a sn-glycerol 3-phosphate binding site. Residue Arg17 coordinates ADP. Residues Arg83, Glu84, Tyr135, and Asp244 each coordinate sn-glycerol 3-phosphate. Glycerol is bound by residues Arg83, Glu84, Tyr135, Asp244, and Gln245. Residues Thr266 and Gly309 each contribute to the ADP site. Positions 266, 309, 313, and 410 each coordinate ATP. The ADP site is built by Gly410 and Asn414.

The protein belongs to the FGGY kinase family.

It carries out the reaction glycerol + ATP = sn-glycerol 3-phosphate + ADP + H(+). It functions in the pathway polyol metabolism; glycerol degradation via glycerol kinase pathway; sn-glycerol 3-phosphate from glycerol: step 1/1. With respect to regulation, inhibited by fructose 1,6-bisphosphate (FBP). Functionally, key enzyme in the regulation of glycerol uptake and metabolism. Catalyzes the phosphorylation of glycerol to yield sn-glycerol 3-phosphate. In Paraburkholderia phytofirmans (strain DSM 17436 / LMG 22146 / PsJN) (Burkholderia phytofirmans), this protein is Glycerol kinase.